The following is a 428-amino-acid chain: Probable 4-methylmuconolactone transporter (428 aa).

Residues 1–26 (MFAWYKAGSPQQKKTFWACYSGWALD) are Cytoplasmic-facing. A helical transmembrane segment spans residues 27–47 (SFDMQMFSFLLPALTLTWGLT). Residues 48–50 (KAE) are Periplasmic-facing. Residues 51–71 (VGVLGTVALVVTAIGGWGAGI) form a helical membrane-spanning segment. The Cytoplasmic portion of the chain corresponds to 72–80 (LSDRYGRAR). The chain crosses the membrane as a helical span at residues 81 to 101 (ILVLAIIWFTLFGVLAGFAQS). Topologically, residues 102 to 110 (YQQLLIART) are periplasmic. Residues 111 to 131 (LQGLGFGGEWAVGAALMAEVI) form a helical membrane-spanning segment. Over 132-145 (DSRHRGKAIGFVQS) the chain is Cytoplasmic. Residues 146–166 (GFALGWALAVVVATLLLAWLP) traverse the membrane as a helical segment. Lys-167 is a topological domain (periplasmic). Residues 168-188 (EMAWRVAFWSGIIPALIVLFI) traverse the membrane as a helical segment. Residues 189–227 (RRHVKDSSMFERARQSRAPRASLSSVFNRKYARTLALSS) are Cytoplasmic-facing. A helical transmembrane segment spans residues 228–248 (VLVIGLQAGCYAILVWLPSLL). Over 249–252 (NQRQ) the chain is Periplasmic. The helical transmembrane segment at 253-273 (VAAGSMIVTVFIMAFGSFCGF) threads the bilayer. Residues 274-287 (AVTADLSDRIGRRP) lie on the Cytoplasmic side of the membrane. A helical membrane pass occupies residues 288–308 (TLILLSVCAWIVTVSYMLLPL). Residues 309–314 (NTTLTA) lie on the Periplasmic side of the membrane. A helical membrane pass occupies residues 315–335 (ILGFLVGFSAIGMFAALGPFL). Residues 336–356 (SELFPTNVRTTCMGFAYNVGK) lie on the Cytoplasmic side of the membrane. A helical transmembrane segment spans residues 357–371 (SIGAGSVVGVGVLST). The Periplasmic segment spans residues 372-377 (HIGLAN). A helical transmembrane segment spans residues 378 to 398 (AMGTFCLVAYAFAVFGIMLLP). Residues 399-428 (ETRGIAIENIGEADAHSPAAPLAQPASARS) lie on the Cytoplasmic side of the membrane.

It belongs to the major facilitator superfamily. Sugar transporter (TC 2.A.1.1) family.

Its subcellular location is the cell inner membrane. Probable uptake of 4-methylmuconolactone. This is Probable 4-methylmuconolactone transporter from Cupriavidus pinatubonensis (strain JMP 134 / LMG 1197) (Cupriavidus necator (strain JMP 134)).